Reading from the N-terminus, the 165-residue chain is Putative pre-16S rRNA nuclease (165 aa).

It belongs to the YqgF nuclease family.

It localises to the cytoplasm. Its function is as follows. Could be a nuclease involved in processing of the 5'-end of pre-16S rRNA. The sequence is that of Putative pre-16S rRNA nuclease from Sinorhizobium medicae (strain WSM419) (Ensifer medicae).